The sequence spans 415 residues: Na(+)-translocating NADH-quinone reductase subunit B (415 aa).

4 helical membrane passes run 23-40 (WFAL…PGLV), 56-76 (IMIM…YNAG), 129-149 (FLPI…LFCM), and 164-184 (ILFA…LGIT). At Thr236 the chain carries FMN phosphoryl threonine. 5 helical membrane passes run 275–295 (VSTL…IASW), 297–317 (IIGG…VIGS), 325–345 (MPWH…FMAT), 358–378 (WAYG…NPAY), and 381–401 (GMML…HVVV).

Belongs to the NqrB/RnfD family. Composed of six subunits; NqrA, NqrB, NqrC, NqrD, NqrE and NqrF. It depends on riboflavin as a cofactor. The cofactor is FMN.

The protein resides in the cell inner membrane. The enzyme catalyses a ubiquinone + n Na(+)(in) + NADH + H(+) = a ubiquinol + n Na(+)(out) + NAD(+). Functionally, NQR complex catalyzes the reduction of ubiquinone-1 to ubiquinol by two successive reactions, coupled with the transport of Na(+) ions from the cytoplasm to the periplasm. NqrA to NqrE are probably involved in the second step, the conversion of ubisemiquinone to ubiquinol. This Vibrio cholerae serotype O1 (strain ATCC 39541 / Classical Ogawa 395 / O395) protein is Na(+)-translocating NADH-quinone reductase subunit B.